The sequence spans 281 residues: UPF0294 protein VP2298 (281 aa).

Belongs to the UPF0294 family.

Its subcellular location is the cytoplasm. The sequence is that of UPF0294 protein VP2298 from Vibrio parahaemolyticus serotype O3:K6 (strain RIMD 2210633).